Consider the following 314-residue polypeptide: Probable cell division protein WhiA (314 aa).

The H-T-H motif DNA-binding region spans Ser-274–Asn-308.

The protein belongs to the WhiA family.

Its function is as follows. Involved in cell division and chromosome segregation. The polypeptide is Probable cell division protein WhiA (Staphylococcus epidermidis (strain ATCC 35984 / DSM 28319 / BCRC 17069 / CCUG 31568 / BM 3577 / RP62A)).